We begin with the raw amino-acid sequence, 136 residues long: NADPH-dependent 7-cyano-7-deazaguanine reductase (136 aa).

The active-site Thioimide intermediate is cysteine 53. Catalysis depends on aspartate 60, which acts as the Proton donor. Substrate-binding positions include 75 to 77 and 94 to 95; these read VEL and HE.

Belongs to the GTP cyclohydrolase I family. QueF type 1 subfamily.

The protein resides in the cytoplasm. It carries out the reaction 7-aminomethyl-7-carbaguanine + 2 NADP(+) = 7-cyano-7-deazaguanine + 2 NADPH + 3 H(+). It participates in tRNA modification; tRNA-queuosine biosynthesis. In terms of biological role, catalyzes the NADPH-dependent reduction of 7-cyano-7-deazaguanine (preQ0) to 7-aminomethyl-7-deazaguanine (preQ1). The chain is NADPH-dependent 7-cyano-7-deazaguanine reductase from Nostoc sp. (strain PCC 7120 / SAG 25.82 / UTEX 2576).